A 185-amino-acid chain; its full sequence is Ribosome-recycling factor (185 aa).

It belongs to the RRF family.

Its subcellular location is the cytoplasm. Functionally, responsible for the release of ribosomes from messenger RNA at the termination of protein biosynthesis. May increase the efficiency of translation by recycling ribosomes from one round of translation to another. This chain is Ribosome-recycling factor, found in Streptococcus thermophilus (strain CNRZ 1066).